The chain runs to 270 residues: MRLIIQPDYQSVSQWAAHYVAAKIKAANPTPEKPFVLGCPTGSSPLGMYKALIDLNKKGIVSFQNVVTFNMDEYVGLPKEHPESYYSFMWNNFFSHIDIKKENTNILNGNAPDLDAECARYEEKIKSYGGIDLFMGGIGPDGHIAFNEPGSSLTSRTRQKTLTTDTIIANSRFFDNDINKVPKTALTVGVGTVLSAKEVMIIVNGHNKARALYHAVEGSITQMWTISALQMHEKGIIVCDDAATEELKVGTYRYFKDIEAGHLDPESLIK.

Aspartate 72 acts as the Proton acceptor; for enolization step in catalysis. Aspartate 141 functions as the For ring-opening step in the catalytic mechanism. Histidine 143 serves as the catalytic Proton acceptor; for ring-opening step. Residue glutamate 148 is the For ring-opening step of the active site.

The protein belongs to the glucosamine/galactosamine-6-phosphate isomerase family. NagB subfamily.

The catalysed reaction is alpha-D-glucosamine 6-phosphate + H2O = beta-D-fructose 6-phosphate + NH4(+). It functions in the pathway amino-sugar metabolism; N-acetylneuraminate degradation; D-fructose 6-phosphate from N-acetylneuraminate: step 5/5. Its activity is regulated as follows. Allosterically activated by N-acetylglucosamine 6-phosphate (GlcNAc6P). Catalyzes the reversible isomerization-deamination of glucosamine 6-phosphate (GlcN6P) to form fructose 6-phosphate (Fru6P) and ammonium ion. The chain is Glucosamine-6-phosphate deaminase (nagB) from Bacteroides thetaiotaomicron (strain ATCC 29148 / DSM 2079 / JCM 5827 / CCUG 10774 / NCTC 10582 / VPI-5482 / E50).